The chain runs to 142 residues: Hemoglobin subunit alpha-A (142 aa).

The 141-residue stretch at 2 to 142 (VLSAADKGNV…VATVLTAKYR (141 aa)) folds into the Globin domain. H59 serves as a coordination point for O2. H88 serves as a coordination point for heme b.

The protein belongs to the globin family. In terms of assembly, heterotetramer of two alpha chains and two beta chains. In terms of tissue distribution, red blood cells.

In terms of biological role, involved in oxygen transport from the lung to the various peripheral tissues. The polypeptide is Hemoglobin subunit alpha-A (HBAA) (Anseranas semipalmata (Magpie goose)).